Here is a 445-residue protein sequence, read N- to C-terminus: Ubiquitin carboxyl-terminal hydrolase MINDY-3 (445 aa).

Residue C51 is the Nucleophile of the active site. S125 is subject to Phosphoserine. H287 acts as the Proton acceptor in catalysis.

It belongs to the MINDY deubiquitinase family. FAM188 subfamily. In terms of assembly, interacts with COPS5. As to expression, widely expressed with high levels in heart, skeletal muscle, and kidney, and low levels in liver and brain. Also expressed in lung (at protein level).

It is found in the nucleus. It catalyses the reaction Thiol-dependent hydrolysis of ester, thioester, amide, peptide and isopeptide bonds formed by the C-terminal Gly of ubiquitin (a 76-residue protein attached to proteins as an intracellular targeting signal).. Its function is as follows. Hydrolase that can remove 'Lys-48'-linked conjugated ubiquitin from proteins. In Homo sapiens (Human), this protein is Ubiquitin carboxyl-terminal hydrolase MINDY-3.